Consider the following 922-residue polypeptide: Cell cycle and apoptosis regulator protein 2 (922 aa).

Residues 1-39 (MSQFKRQRINPLPGGRNFSGAASTSLLGPPPGLLTPPVA) form a disordered region. Position 35 is a phosphothreonine (Thr-35). Lys-112 is subject to N6-acetyllysine; by KAT8. At Lys-123 the chain carries N6-methyllysine. A Phosphoserine modification is found at Ser-124. 4 disordered regions span residues 178–219 (LNRF…KPRH), 280–307 (RIQV…PTYS), 446–508 (KATE…EPAV), and 567–638 (VSPP…RGEA). Residue Arg-180 is modified to Omega-N-methylarginine. Over residues 188–200 (GRLDQGRSDDYDS) the composition is skewed to basic and acidic residues. Lys-215 is subject to N6-acetyllysine; by KAT8. Residues 473–491 (QADTSKQNTETMEATTQQD) show a composition bias toward polar residues. Phosphothreonine is present on Thr-483. Ser-568 is modified (phosphoserine). Residues 571–601 (EPEKEEAAKEDAVKEEEAVKEEAVKVSKDEV) show a composition bias toward basic and acidic residues. Residues 573–596 (EKEEAAKEDAVKEEEAVKEEAVKV) are a coiled coil. Residue Lys-590 forms a Glycyl lysine isopeptide (Lys-Gly) (interchain with G-Cter in SUMO2 and SUMO3); alternate linkage. Residue Lys-590 forms a Glycyl lysine isopeptide (Lys-Gly) (interchain with G-Cter in SUMO2); alternate linkage. The tract at residues 609-669 (ESDSPLKEDG…DEFAGAKLEE (61 aa)) is interaction with MCC. 5 positions are modified to phosphoserine: Ser-612, Ser-626, Ser-674, Ser-677, and Ser-680. A Phosphotyrosine modification is found at Tyr-684. Ser-686 and Ser-807 each carry phosphoserine. The segment at 703–922 (DCLLAFVFFD…VEKEEPTPSN (220 aa)) is interaction with NR1D1. A coiled-coil region spans residues 828 to 898 (LENKIHTLEL…QDFRRRLTPL (71 aa)). A Phosphothreonine modification is found at Thr-896.

Component of the DBIRD complex. Interacts with ZNF326/ZIRD; the interaction is direct. Interacts (via N-terminus) with SIRT1, which inhibits the deacetylation of substrates. Interacts (via N-terminus) with SUV39H1; this interaction abolishes the interaction with SIRT1. Component of a nuclear receptor-mediated transcription complex composed of at least ZNF335, CCAR2 and EMSY; the complex stimulates the transcription of nuclear receptor target genes such as SOX9 and HOXA1. Within the complex interacts with EMSY and interacts with ZNF335 (via C-terminus). Components of this complex may associate with components of a histone methylation complex to form a complex at least composed of ZNF335, HCFC1, CCAR2, EMSY, MKI67, RBBP5, ASH2L and WDR5. Within this complex, interacts with ASH2L. Interacts with NR1D1. Interacts (via N-terminus) with ESR1 and ESR2. Interacts (via N-terminus) with HDAC3 (via C-terminus). Interacts with HDAC1 and MED2F. Interacts with MCC. Interacts (via N-terminus) with NR1H2 and NR1H3 in a ligand-independent manner. Interacts with CSNK2A1. Interacts (via N-terminus) with p53/TP53. Interacts (via N-terminus) with BRCA1 (via the BRCT domains). Interacts (via N-terminus) with CHEK2 (via protein kinase domain). Interacts with PSEM3. Interacts (via N-terminus) with PSIA3 and SENP1. The sumoylated form shows a preferential interaction with SIRT1 as compared to its unmodified form. Interacts with CECR2; may form part of the CERF-1 and/or CEF-5 ISWI chromatin remodeling complexes in embryonic stem cells. In terms of processing, acetylation at Lys-112 and Lys-215 by KAT8 prevents inhibitory binding to SIRT1 and increases its deacetylase activity. Genotoxic stress induces its sumoylation and sumoylation promotes the SIRT1-CCAR2 interaction which in turn inhibits SIRT1-mediated deacetylation of p53/TP53. Sumoylation leads to transcriptional activation of p53/TP53 by sequestering SIRT1 from p53/TP53. Desumoylated by SENP1.

The protein resides in the nucleus. The protein localises to the cytoplasm. It localises to the cytoskeleton. It is found in the spindle. Its function is as follows. Core component of the DBIRD complex, a multiprotein complex that acts at the interface between core mRNP particles and RNA polymerase II (RNAPII) and integrates transcript elongation with the regulation of alternative splicing: the DBIRD complex affects local transcript elongation rates and alternative splicing of a large set of exons embedded in (A + T)-rich DNA regions. Inhibits SIRT1 deacetylase activity leading to increasing levels of p53/TP53 acetylation and p53-mediated apoptosis. Inhibits SUV39H1 methyltransferase activity. Mediates ligand-dependent transcriptional activation by nuclear hormone receptors. Plays a critical role in maintaining genomic stability and cellular integrity following UV-induced genotoxic stress. Regulates the circadian expression of the core clock components NR1D1 and BMAL1. Enhances the transcriptional repressor activity of NR1D1 through stabilization of NR1D1 protein levels by preventing its ubiquitination and subsequent degradation. Represses the ligand-dependent transcriptional activation function of ESR2. Acts as a regulator of PCK1 expression and gluconeogenesis by a mechanism that involves, at least in part, both NR1D1 and SIRT1. Negatively regulates the deacetylase activity of HDAC3 and can alter its subcellular localization. Positively regulates the beta-catenin pathway (canonical Wnt signaling pathway) and is required for MCC-mediated repression of the beta-catenin pathway. Represses ligand-dependent transcriptional activation function of NR1H2 and NR1H3 and inhibits the interaction of SIRT1 with NR1H3. Plays an important role in tumor suppression through p53/TP53 regulation; stabilizes p53/TP53 by affecting its interaction with ubiquitin ligase MDM2. Represses the transcriptional activator activity of BRCA1. Inhibits SIRT1 in a CHEK2 and PSEM3-dependent manner and inhibits the activity of CHEK2 in vitro. The polypeptide is Cell cycle and apoptosis regulator protein 2 (Ccar2) (Mus musculus (Mouse)).